The sequence spans 354 residues: Glycerol-1-phosphate dehydrogenase [NAD(P)+] (354 aa).

NAD(+) contacts are provided by residues glycine 103 to aspartate 107 and threonine 125 to serine 128. Aspartate 130 serves as a coordination point for substrate. Serine 134 contacts NAD(+). Aspartate 176 is a binding site for substrate. The Zn(2+) site is built by aspartate 176 and histidine 255. Histidine 259 lines the substrate pocket. Residue histidine 271 participates in Zn(2+) binding.

The protein belongs to the glycerol-1-phosphate dehydrogenase family. In terms of assembly, homodimer. Requires Zn(2+) as cofactor.

Its subcellular location is the cytoplasm. It carries out the reaction sn-glycerol 1-phosphate + NAD(+) = dihydroxyacetone phosphate + NADH + H(+). The catalysed reaction is sn-glycerol 1-phosphate + NADP(+) = dihydroxyacetone phosphate + NADPH + H(+). It functions in the pathway membrane lipid metabolism; glycerophospholipid metabolism. Its function is as follows. Catalyzes the NAD(P)H-dependent reduction of dihydroxyacetonephosphate (DHAP or glycerone phosphate) to glycerol 1-phosphate (G1P). The G1P thus generated is used as the glycerophosphate backbone of phospholipids in the cellular membranes of Archaea. The chain is Glycerol-1-phosphate dehydrogenase [NAD(P)+] from Nitrosopumilus maritimus (strain SCM1).